The chain runs to 160 residues: Dihydrofolate reductase (160 aa).

The 158-residue stretch at 2-159 folds into the DHFR domain; it reads TFSLIVATTL…YDCRFLILTR (158 aa). Ile6 contributes to the substrate binding site. Residues Ala8 and 14 to 20 each bind NADP(+); that span reads VIGKDNQ. Asp28 provides a ligand contact to substrate. Residue 46–47 participates in NADP(+) binding; that stretch reads KT. Residues Arg53 and Arg58 each coordinate substrate. NADP(+)-binding positions include 64 to 65 and 96 to 103; these read SR and GGGELFKQ. A substrate-binding site is contributed by Thr114.

The protein belongs to the dihydrofolate reductase family.

The catalysed reaction is (6S)-5,6,7,8-tetrahydrofolate + NADP(+) = 7,8-dihydrofolate + NADPH + H(+). It functions in the pathway cofactor biosynthesis; tetrahydrofolate biosynthesis; 5,6,7,8-tetrahydrofolate from 7,8-dihydrofolate: step 1/1. Functionally, key enzyme in folate metabolism. Catalyzes an essential reaction for de novo glycine and purine synthesis, and for DNA precursor synthesis. The protein is Dihydrofolate reductase (folA) of Haemophilus influenzae (strain ATCC 51907 / DSM 11121 / KW20 / Rd).